We begin with the raw amino-acid sequence, 478 residues long: MTSRYEVVIGLEVHVQLTTQTKIFCNCSIAFGNQPNSQTCPVCLGLPGALPVLNRKVVEYAIKTGLATNCSIAPRSIFARKNYFYPDLPKGYQISQFELPICEHGRLDIDVDGTSKSIGITRIHMEEDAGKLLHDDGDTSRVDLNRACTPLMEIVSEPDMRSSDEAIAYLKKLHQIVVYLGVCDGNLEEGSFRCDANVSIRPWGQKEFGTRAELKNINSFRFIKQAIDYEIERQADILDDGGTVVQETRLFDTASGTTRSMRSKEEAHDYRYFPDPDLVPLIVSDDWVEQIRRELPELPEAKIARFVGELGIPQYDAEVLAADRAMAEYYDSLVKAHGNAKLCANWVMGELQRALNDSGAGIAECPVTPPMLAGILQRIDDNTISNKIAKTVFDAMWQSGKDADTIIEEQGLKQVTDTGAIEAVIDEVLAANPSQVEEYRGGKDKLMGFFVGQVMRATKGKANPKTLNELLKKKLTGE.

Belongs to the GatB/GatE family. GatB subfamily. Heterotrimer of A, B and C subunits.

The enzyme catalyses L-glutamyl-tRNA(Gln) + L-glutamine + ATP + H2O = L-glutaminyl-tRNA(Gln) + L-glutamate + ADP + phosphate + H(+). It carries out the reaction L-aspartyl-tRNA(Asn) + L-glutamine + ATP + H2O = L-asparaginyl-tRNA(Asn) + L-glutamate + ADP + phosphate + 2 H(+). Its function is as follows. Allows the formation of correctly charged Asn-tRNA(Asn) or Gln-tRNA(Gln) through the transamidation of misacylated Asp-tRNA(Asn) or Glu-tRNA(Gln) in organisms which lack either or both of asparaginyl-tRNA or glutaminyl-tRNA synthetases. The reaction takes place in the presence of glutamine and ATP through an activated phospho-Asp-tRNA(Asn) or phospho-Glu-tRNA(Gln). This is Aspartyl/glutamyl-tRNA(Asn/Gln) amidotransferase subunit B from Syntrophotalea carbinolica (strain DSM 2380 / NBRC 103641 / GraBd1) (Pelobacter carbinolicus).